A 362-amino-acid chain; its full sequence is NAD(P)H-quinone oxidoreductase subunit 1, chloroplastic (362 aa).

A run of 7 helical transmembrane segments spans residues 26–48, 97–119, 126–148, 163–185, 254–276, 296–318, and 338–360; these read LIWILPIFALLLGITIEVLVIVW, FSIGPSIAVISILLSFLVIPLGY, LSIGVFLWIAISSIAPIGLLMAG, AAAQSISYEIPLTFCVLAISLLS, LFYLVSYLNLLVSSLFVTVLYLG, IIGILEMVIGIFITLTKAYLFLF, and LGWKFLLPISLGNLLLTTSFQLV.

Belongs to the complex I subunit 1 family. NDH is composed of at least 16 different subunits, 5 of which are encoded in the nucleus.

The protein resides in the plastid. It localises to the chloroplast thylakoid membrane. The enzyme catalyses a plastoquinone + NADH + (n+1) H(+)(in) = a plastoquinol + NAD(+) + n H(+)(out). The catalysed reaction is a plastoquinone + NADPH + (n+1) H(+)(in) = a plastoquinol + NADP(+) + n H(+)(out). In terms of biological role, NDH shuttles electrons from NAD(P)H:plastoquinone, via FMN and iron-sulfur (Fe-S) centers, to quinones in the photosynthetic chain and possibly in a chloroplast respiratory chain. The immediate electron acceptor for the enzyme in this species is believed to be plastoquinone. Couples the redox reaction to proton translocation, and thus conserves the redox energy in a proton gradient. The chain is NAD(P)H-quinone oxidoreductase subunit 1, chloroplastic (ndhA) from Zea mays (Maize).